The sequence spans 104 residues: Large ribosomal subunit protein uL24 (104 aa).

The protein belongs to the universal ribosomal protein uL24 family. In terms of assembly, part of the 50S ribosomal subunit.

Functionally, one of two assembly initiator proteins, it binds directly to the 5'-end of the 23S rRNA, where it nucleates assembly of the 50S subunit. In terms of biological role, one of the proteins that surrounds the polypeptide exit tunnel on the outside of the subunit. The protein is Large ribosomal subunit protein uL24 of Pseudoalteromonas translucida (strain TAC 125).